A 110-amino-acid chain; its full sequence is U1-lycotoxin-Ls1bb (110 aa).

Positions 1 to 20 are cleaved as a signal peptide; sequence MKFVLLFGVLLVTLFSYSSA. A propeptide spanning residues 21-44 is cleaved from the precursor; the sequence is EMLDDFDQADEDELLSLIEKEEAR. 4 disulfide bridges follow: Cys-47-Cys-62, Cys-54-Cys-71, Cys-61-Cys-89, and Cys-73-Cys-87.

The protein belongs to the neurotoxin 19 (CSTX) family. 03 subfamily. As to expression, expressed by the venom gland.

The protein resides in the secreted. The polypeptide is U1-lycotoxin-Ls1bb (Lycosa singoriensis (Wolf spider)).